Consider the following 405-residue polypeptide: Glucose-1-phosphate adenylyltransferase (405 aa).

Residues Y96, G161, 176–177 (EK), and S194 contribute to the alpha-D-glucose 1-phosphate site.

It belongs to the bacterial/plant glucose-1-phosphate adenylyltransferase family. Homotetramer.

The catalysed reaction is alpha-D-glucose 1-phosphate + ATP + H(+) = ADP-alpha-D-glucose + diphosphate. It participates in glycan biosynthesis; glycogen biosynthesis. Functionally, involved in the biosynthesis of ADP-glucose, a building block required for the elongation reactions to produce glycogen. Catalyzes the reaction between ATP and alpha-D-glucose 1-phosphate (G1P) to produce pyrophosphate and ADP-Glc. This chain is Glucose-1-phosphate adenylyltransferase, found in Aliivibrio fischeri (strain ATCC 700601 / ES114) (Vibrio fischeri).